The sequence spans 92 residues: Conotoxin Im9.4 (92 aa).

A signal peptide spans M1–G20. Residues N21–R62 constitute a propeptide that is removed on maturation. Disulfide bonds link C65–C79, C69–C81, and C75–C87. N90 is subject to Asparagine amide.

This sequence belongs to the conotoxin P superfamily. In terms of tissue distribution, expressed by the venom duct.

The protein resides in the secreted. In terms of biological role, probable neurotoxin that inhibits ion channels. This Conus imperialis (Imperial cone) protein is Conotoxin Im9.4.